The sequence spans 84 residues: MTDAANPPADISALSFEEALSQLERIVQELESGQAALERSIDIYERGAALKAHCEKKLEAARLKVEKIVLGQGGAVAAEPAEFN.

The protein belongs to the XseB family. As to quaternary structure, heterooligomer composed of large and small subunits.

Its subcellular location is the cytoplasm. It catalyses the reaction Exonucleolytic cleavage in either 5'- to 3'- or 3'- to 5'-direction to yield nucleoside 5'-phosphates.. Its function is as follows. Bidirectionally degrades single-stranded DNA into large acid-insoluble oligonucleotides, which are then degraded further into small acid-soluble oligonucleotides. In Caulobacter vibrioides (strain ATCC 19089 / CIP 103742 / CB 15) (Caulobacter crescentus), this protein is Exodeoxyribonuclease 7 small subunit.